The following is a 97-amino-acid chain: Co-chaperonin GroES (97 aa).

It belongs to the GroES chaperonin family. Heptamer of 7 subunits arranged in a ring. Interacts with the chaperonin GroEL.

It localises to the cytoplasm. Functionally, together with the chaperonin GroEL, plays an essential role in assisting protein folding. The GroEL-GroES system forms a nano-cage that allows encapsulation of the non-native substrate proteins and provides a physical environment optimized to promote and accelerate protein folding. GroES binds to the apical surface of the GroEL ring, thereby capping the opening of the GroEL channel. This is Co-chaperonin GroES from Aeromonas salmonicida (strain A449).